A 350-amino-acid chain; its full sequence is Melatonin receptor type 1A (350 aa).

Residues 1-29 (MQGNGSALPNASQPVLRGDGARPSWLASA) lie on the Extracellular side of the membrane. Asn4 and Asn10 each carry an N-linked (GlcNAc...) asparagine glycan. Residues 30-50 (LACVLIFTIVVDILGNLLVIL) traverse the membrane as a helical segment. Residues 51 to 63 (SVYRNKKLRNAGN) lie on the Cytoplasmic side of the membrane. The chain crosses the membrane as a helical span at residues 64 to 84 (IFVVSLAVADLVVAIYPYPLV). At 85–102 (LMSIFNNGWNLGYLHCQV) the chain is on the extracellular side. Cys100 and Cys177 form a disulfide bridge. The chain crosses the membrane as a helical span at residues 103 to 123 (SGFLMGLSVIGSIFNITGIAI). At 124 to 142 (NRYCYICHSLKYDKLYSSK) the chain is on the cytoplasmic side. A helical membrane pass occupies residues 143-163 (NSLCYVLLIWLLTLAAVLPNL). Positions 162 and 181 each coordinate melatonin. Over 164 to 187 (RAGTLQYDPRIYSCTFAQSVSSAY) the chain is Extracellular. Residues 188 to 208 (TIAVVVFHFLVPMIIVIFCYL) form a helical membrane-spanning segment. At 209 to 240 (RIWILVLQVRQRVKPDRKPKLKPQDFRNFVTM) the chain is on the cytoplasmic side. The helical transmembrane segment at 241-261 (FVVFVLFAICWAPLNFIGLAV) threads the bilayer. Residues 262-274 (ASDPASMVPRIPE) are Extracellular-facing. The chain crosses the membrane as a helical span at residues 275-295 (WLFVASYYMAYFNSCLNAIIY). Topologically, residues 296–350 (GLLNQNFRKEYRRIIVSLCTARVFFVDSSNDVADRVKWKPSPLMTNNNVVKVDSV) are cytoplasmic.

It belongs to the G-protein coupled receptor 1 family. As to expression, expressed in hypophyseal pars tuberalis and hypothalamic suprachiasmatic nuclei (SCN). Hippocampus.

Its subcellular location is the cell membrane. Its function is as follows. High affinity receptor for melatonin. Likely to mediate the reproductive and circadian actions of melatonin. The activity of this receptor is mediated by pertussis toxin sensitive G proteins that inhibit adenylate cyclase activity. Possibly involved in sleep induction, by melatonin activation of the potassium channel KCNMA1/BK and the dissociation of G-beta and G-gamma subunits, thereby decreasing synaptic transmission. This is Melatonin receptor type 1A (MTNR1A) from Homo sapiens (Human).